Reading from the N-terminus, the 309-residue chain is Zinc transporter ZIPB (309 aa).

At 1 to 22 (MNQPSSLAADLRGAWHAQAQSH) the chain is on the periplasmic side. A helical transmembrane segment spans residues 23 to 50 (PLITLGLAASAAGVVLLLVAGIVNALTG). Residues 51 to 55 (ENRVH) are Extracellular-facing. The helical transmembrane segment at 56–81 (VGYAVLGGAAGFAATALGALMALGLR) threads the bilayer. Over 82-83 (AI) the chain is Periplasmic. A helical membrane pass occupies residues 84 to 119 (SARTQDAMLGFAAGMMLAASAFSLILPGLDAAGTIV). D89 contacts Zn(2+). M99 provides a ligand contact to Cd(2+). At 120 to 121 (GP) the chain is on the extracellular side. The helical transmembrane segment at 122–145 (GPAAAAVVALGLGLGVLLMLGLDY) threads the bilayer. D144 contributes to the Zn(2+) binding site. A Cd(2+)-binding site is contributed by D144. The Periplasmic segment spans residues 146 to 165 (FTPHEHERTGHQGPEAARVN). The chain crosses the membrane as a helical span at residues 166-190 (RVWLFVLTIILHNLPEGMAIGVSFA). Zn(2+) is bound at residue H177. Positions 177, 178, and 181 each coordinate Cd(2+). Residue E181 coordinates Zn(2+). The Extracellular portion of the chain corresponds to 191 to 192 (TG). Residues 193–222 (DLRIGLPLTSAIAIQDVPEGLAVALALRAV) traverse the membrane as a helical segment. Q207 is a binding site for Zn(2+). Residues Q207, D208, and E211 each coordinate Cd(2+). E211 is a binding site for Zn(2+). The Periplasmic segment spans residues 223 to 224 (GL). The chain crosses the membrane as a helical span at residues 225-251 (PIGRAVLVAVASGLMEPLGALVGVGIS). E240 serves as a coordination point for Cd(2+). Topologically, residues 252-255 (SGFA) are extracellular. The helical transmembrane segment at 256 to 275 (LAYPISMGLAAGAMIFVVSH) threads the bilayer. Residues H275, E276, and H286 each contribute to the Zn(2+) site. A Cd(2+)-binding site is contributed by H275. The Periplasmic segment spans residues 276–287 (EVIPETHRNGHE). A helical membrane pass occupies residues 288–308 (TTATVGLMAGFALMMFLDTAL). G309 is a topological domain (extracellular).

This sequence belongs to the ZIP transporter (TC 2.A.5) family. As to quaternary structure, homodimer. Also exists as a monomer.

It is found in the cell inner membrane. It catalyses the reaction Zn(2+)(in) = Zn(2+)(out). It carries out the reaction Cd(2+)(in) = Cd(2+)(out). In terms of biological role, selective electrodiffusional channel that mediates the uptake of Zn(2+). Exploits in vivo zinc concentration gradients (maintained by cellular zinc homeostasis) to passively move zinc ions into the cytoplasm. ZIPB-mediated zinc flux is dependent upon pH, but independent of the proton motive force. Is also able to import Cd(2+), but is not permeable to Co(2+), Cu(2+), Fe(2+), Mn(2+) and Ni(2+). The protein is Zinc transporter ZIPB of Bordetella bronchiseptica (strain ATCC BAA-588 / NCTC 13252 / RB50) (Alcaligenes bronchisepticus).